Here is a 120-residue protein sequence, read N- to C-terminus: Small ribosomal subunit protein uS19 (120 aa).

It belongs to the universal ribosomal protein uS19 family.

The protein is Small ribosomal subunit protein uS19 (RPS15) of Naegleria gruberi (Amoeba).